Consider the following 210-residue polypeptide: MADS-box protein AeAP3-2 (210 aa).

Positions 1–36 constitute an MADS-box domain; that stretch reads GGLLKKARELAILCDAQLGVIIFSSSGKMFEFSSPP. The region spanning 59-149 is the K-box domain; it reads NQQVYCEITR…YRVIQDHHAA (91 aa).

As to expression, expressed exclusively in the carpel.

The protein localises to the nucleus. Functionally, probable transcription factor. The sequence is that of MADS-box protein AeAP3-2 (AP3-2) from Asarum europaeum (Asarabacca).